Consider the following 128-residue polypeptide: CD59 glycoprotein (128 aa).

A signal peptide spans M1–S25. Residues L26–S108 form the UPAR/Ly6 domain. Intrachain disulfides connect C28–C51, C31–C38, and C44–C64. An N-linked (GlcNAc...) asparagine glycan is attached at N43. An N-linked (Glc) (glycation) lysine glycan is attached at K66. 2 disulfide bridges follow: C70–C88 and C89–C94. 2 O-linked (GalNAc...) threonine glycosylation sites follow: T76 and T77. N102 is lipidated: GPI-anchor amidated asparagine. The propeptide at G103–P128 is removed in mature form.

Interacts with T-cell surface antigen CD2. In terms of processing, N- and O-glycosylated. The N-glycosylation mainly consists of a family of biantennary complex-type structures with and without lactosamine extensions and outer arm fucose residues. Also significant amounts of triantennary complexes (22%). Variable sialylation also present in the Asn-43 oligosaccharide. The predominant O-glycans are mono-sialylated forms of the disaccharide, Gal-beta-1,3GalNAc, and their sites of attachment are probably on Thr-76 and Thr-77. The GPI-anchor of soluble urinary CD59 has no inositol-associated phospholipid, but is composed of seven different GPI-anchor variants of one or more monosaccharide units. Major variants contain sialic acid, mannose and glucosamine. Sialic acid linked to an N-acetylhexosamine-galactose arm is present in two variants. Glycated. Glycation is found in diabetic subjects, but only at minimal levels in nondiabetic subjects. Glycated CD59 lacks MAC-inhibitory function and confers to vascular complications of diabetes.

It is found in the cell membrane. Its subcellular location is the secreted. Functionally, potent inhibitor of the complement membrane attack complex (MAC) action, which protects human cells from damage during complement activation. Acts by binding to the beta-haipins of C8 (C8A and C8B) components of the assembling MAC, forming an intermolecular beta-sheet that prevents incorporation of the multiple copies of C9 required for complete formation of the osmolytic pore. The soluble form from urine retains its specific complement binding activity, but exhibits greatly reduced ability to inhibit complement membrane attack complex (MAC) assembly on cell membranes. This chain is CD59 glycoprotein, found in Homo sapiens (Human).